Reading from the N-terminus, the 307-residue chain is Chaperone protein DnaJ 2 (307 aa).

One can recognise a J domain in the interval 6–71 (NYYQILGVPR…TKRRELDSRL (66 aa)). The segment at 69-133 (SRLFGRFRRP…TRRTKVVSPA (65 aa)) is disordered. Positions 88–99 (NGGRSPNGTSVN) are enriched in polar residues. A compositionally biased stretch (low complexity) spans 100-114 (GQVRTPTGRTGTRQP).

The protein belongs to the DnaJ family. As to quaternary structure, homodimer. Zn(2+) serves as cofactor.

Its subcellular location is the cytoplasm. Its function is as follows. Participates actively in the response to hyperosmotic and heat shock by preventing the aggregation of stress-denatured proteins and by disaggregating proteins, also in an autonomous, DnaK-independent fashion. Unfolded proteins bind initially to DnaJ; upon interaction with the DnaJ-bound protein, DnaK hydrolyzes its bound ATP, resulting in the formation of a stable complex. GrpE releases ADP from DnaK; ATP binding to DnaK triggers the release of the substrate protein, thus completing the reaction cycle. Several rounds of ATP-dependent interactions between DnaJ, DnaK and GrpE are required for fully efficient folding. Also involved, together with DnaK and GrpE, in the DNA replication of plasmids through activation of initiation proteins. This Synechocystis sp. (strain ATCC 27184 / PCC 6803 / Kazusa) protein is Chaperone protein DnaJ 2 (dnaJ2).